A 161-amino-acid polypeptide reads, in one-letter code: MAEEEPSSVSRDLQELQRKLGLLLESFQNNSKVVAFMKSPVGRFLDRHPFLVLTVLMFVTMSAIPVGFFLLIVVLTSLGALMGAILLEGLVISVCGLSLLCILCGLGFVSLALSGITMMSYVVVSCLMSYWFSPSRPPTQQHANIDSQLAMKFTESEKLGL.

Topologically, residues Met-1–Arg-43 are cytoplasmic. The helical transmembrane segment at Phe-44–Met-61 threads the bilayer. Residues Ser-62–Gly-67 are Lumenal-facing. A helical transmembrane segment spans residues Phe-68–Leu-87. Topologically, residues Glu-88–Ser-93 are cytoplasmic. A helical membrane pass occupies residues Val-94–Ser-110. Residues Leu-111 to Ile-116 are Lumenal-facing. Residues Thr-117–Ser-133 traverse the membrane as a helical segment. Over Pro-134 to Leu-161 the chain is Cytoplasmic.

Belongs to the LDAF1 family. Interacts with BSCL2/seipin to form an oligomeric complex.

It is found in the endoplasmic reticulum membrane. The protein localises to the lipid droplet. In terms of biological role, plays an important role in the formation of lipid droplets (LD) which are storage organelles at the center of lipid and energy homeostasis. In association with BSCL2/seipin, defines the sites of LD formation in the endoplasmic reticulum. The chain is Lipid droplet assembly factor 1 from Rattus norvegicus (Rat).